The following is a 178-amino-acid chain: ATP synthase subunit delta (178 aa).

The protein belongs to the ATPase delta chain family. F-type ATPases have 2 components, F(1) - the catalytic core - and F(0) - the membrane proton channel. F(1) has five subunits: alpha(3), beta(3), gamma(1), delta(1), epsilon(1). F(0) has three main subunits: a(1), b(2) and c(10-14). The alpha and beta chains form an alternating ring which encloses part of the gamma chain. F(1) is attached to F(0) by a central stalk formed by the gamma and epsilon chains, while a peripheral stalk is formed by the delta and b chains.

Its subcellular location is the cell membrane. In terms of biological role, f(1)F(0) ATP synthase produces ATP from ADP in the presence of a proton or sodium gradient. F-type ATPases consist of two structural domains, F(1) containing the extramembraneous catalytic core and F(0) containing the membrane proton channel, linked together by a central stalk and a peripheral stalk. During catalysis, ATP synthesis in the catalytic domain of F(1) is coupled via a rotary mechanism of the central stalk subunits to proton translocation. This protein is part of the stalk that links CF(0) to CF(1). It either transmits conformational changes from CF(0) to CF(1) or is implicated in proton conduction. The chain is ATP synthase subunit delta from Streptococcus pyogenes serotype M3 (strain ATCC BAA-595 / MGAS315).